The following is a 430-amino-acid chain: Glutamate-1-semialdehyde 2,1-aminomutase (430 aa).

Position 265 is an N6-(pyridoxal phosphate)lysine (lysine 265).

This sequence belongs to the class-III pyridoxal-phosphate-dependent aminotransferase family. HemL subfamily. Homodimer. Pyridoxal 5'-phosphate is required as a cofactor.

It localises to the cytoplasm. It catalyses the reaction (S)-4-amino-5-oxopentanoate = 5-aminolevulinate. The protein operates within porphyrin-containing compound metabolism; protoporphyrin-IX biosynthesis; 5-aminolevulinate from L-glutamyl-tRNA(Glu): step 2/2. This is Glutamate-1-semialdehyde 2,1-aminomutase from Shewanella putrefaciens (strain CN-32 / ATCC BAA-453).